The sequence spans 709 residues: Cell adhesion molecule CEACAM3 (709 aa).

Residues 1 to 34 form the signal peptide; sequence MELSSVLPCKRCTPWRGLLLTASLLTCWLLPTTA. Ig-like V-type domains are found at residues 35-142, 155-262, 275-382, 393-500, and 509-616; these read QVSI…HVYF, QLSI…QVDT, QLTV…QVNT, LLTI…SVHT, and QLVI…HIYK. Residues Asn73, Asn86, Asn103, Asn110, Asn133, Asn207, Asn224, Asn231, Asn327, Asn344, Asn351, Asn381, Asn462, Asn561, Asn578, and Asn585 are each glycosylated (N-linked (GlcNAc...) asparagine). The region spanning 631–695 is the Ig-like C2-type domain; sequence RVKSSVVLTC…YRCEVSNPVS (65 aa).

Belongs to the immunoglobulin superfamily. CEA family. Expression detected only in placenta.

Functionally, possibly involved in cell adhesion. This is Cell adhesion molecule CEACAM3 from Rattus norvegicus (Rat).